A 444-amino-acid polypeptide reads, in one-letter code: Glutamate--tRNA ligase 1 (444 aa).

The 'HIGH' region signature appears at 7 to 17 (PSPTGYLHVGN). A 'KMSKS' region motif is present at residues 238–242 (KISKR). Residue Lys241 participates in ATP binding.

This sequence belongs to the class-I aminoacyl-tRNA synthetase family. Glutamate--tRNA ligase type 1 subfamily. Monomer.

It is found in the cytoplasm. The catalysed reaction is tRNA(Glu) + L-glutamate + ATP = L-glutamyl-tRNA(Glu) + AMP + diphosphate. Functionally, catalyzes the attachment of glutamate to tRNA(Glu) in a two-step reaction: glutamate is first activated by ATP to form Glu-AMP and then transferred to the acceptor end of tRNA(Glu). The sequence is that of Glutamate--tRNA ligase 1 from Wolbachia pipientis subsp. Culex pipiens (strain wPip).